The primary structure comprises 282 residues: MKYGNLMMTKKKLLIGMVTISGIVILGSCGKTETVNELLIVDQCNDVRDLCRLELANAQVSRYTNFLGKTIKRLQSQTPLRDIQGTVTWNASAGTSLADNSDVQSELGLSCQDDNCTANSNSTAYTLPVGSNTISVSGTVTVDGKTIDLATDVPALVINTSAAGSSVHVFPTELEGNLTLQDLVDSLNQGRHYAHATFSADGSNLKIQCDPGYVWLDDINPEYGGQSSAASARSVAMVSWVEELEEFRVDEFRFLHFDMSSLTLNGVRLGNHVFWEMGCWPT.

The first 28 residues, 1–28, serve as a signal peptide directing secretion; it reads MKYGNLMMTKKKLLIGMVTISGIVILGS. C29 carries N-palmitoyl cysteine lipidation. Residue C29 is the site of S-diacylglycerol cysteine attachment.

Its subcellular location is the cell membrane. Stimulates the host immune inflammatory signaling system allowing the host to combat the bacteria. Stimulates mouse interleukin-6 (Il6) production. The sequence is that of Bacterial lipoprotein FTN_1103 from Francisella tularensis subsp. novicida (strain U112).